The chain runs to 124 residues: MSRILSHAKKNYRKAIVIESLLLVVFYLLIYGWQRQSAVDFSYGFLSAFLPFCTFIFIIFYRKQNFSTKLTALYRAEAIKFILTMVFIIIAIKWLFVINFIAFFVGFLLALVLNNIIPLILNKI.

A run of 3 helical transmembrane segments spans residues 14–34 (KAIV…YGWQ), 41–61 (FSYG…IIFY), and 85–105 (MVFI…AFFV).

The protein resides in the cell membrane. This is an uncharacterized protein from Haemophilus influenzae (strain ATCC 51907 / DSM 11121 / KW20 / Rd).